The sequence spans 317 residues: HTH-type transcriptional repressor PA14_22550 (317 aa).

An HTH lysR-type domain is found at 1 to 59; the sequence is MDKLTAMATFVKVVDAGSFTRAADALGLPKARVSQRVSDLEKHLGVRLLNRTTRALSLT. Residues 19 to 38 constitute a DNA-binding region (H-T-H motif); that stretch reads FTRAADALGLPKARVSQRVS.

The protein belongs to the LysR transcriptional regulatory family.

In terms of biological role, represses the transcription of the operon that consists of PA14_22510 to PA14_22540. The chain is HTH-type transcriptional repressor PA14_22550 from Pseudomonas aeruginosa (strain UCBPP-PA14).